Consider the following 281-residue polypeptide: NADPH-dependent 7-cyano-7-deazaguanine reductase (281 aa).

87–89 (IES) provides a ligand contact to substrate. 89–90 (SK) serves as a coordination point for NADPH. Cysteine 188 serves as the catalytic Thioimide intermediate. Residue aspartate 195 is the Proton donor of the active site. 227–228 (HE) contributes to the substrate binding site. 256–257 (RG) provides a ligand contact to NADPH.

This sequence belongs to the GTP cyclohydrolase I family. QueF type 2 subfamily. In terms of assembly, homodimer.

The protein localises to the cytoplasm. The catalysed reaction is 7-aminomethyl-7-carbaguanine + 2 NADP(+) = 7-cyano-7-deazaguanine + 2 NADPH + 3 H(+). It functions in the pathway tRNA modification; tRNA-queuosine biosynthesis. In terms of biological role, catalyzes the NADPH-dependent reduction of 7-cyano-7-deazaguanine (preQ0) to 7-aminomethyl-7-deazaguanine (preQ1). The protein is NADPH-dependent 7-cyano-7-deazaguanine reductase of Photobacterium profundum (strain SS9).